Reading from the N-terminus, the 208-residue chain is 3-isopropylmalate dehydratase small subunit 2 (208 aa).

Belongs to the LeuD family. LeuD type 1 subfamily. In terms of assembly, heterodimer of LeuC and LeuD.

It catalyses the reaction (2R,3S)-3-isopropylmalate = (2S)-2-isopropylmalate. It participates in amino-acid biosynthesis; L-leucine biosynthesis; L-leucine from 3-methyl-2-oxobutanoate: step 2/4. Catalyzes the isomerization between 2-isopropylmalate and 3-isopropylmalate, via the formation of 2-isopropylmaleate. The protein is 3-isopropylmalate dehydratase small subunit 2 (leuD2) of Salmonella typhimurium (strain LT2 / SGSC1412 / ATCC 700720).